We begin with the raw amino-acid sequence, 368 residues long: Isopentenyl-diphosphate delta-isomerase (368 aa).

7-8 is a binding site for substrate; the sequence is RK. Residues Thr-65, 66-68, Ser-96, and Asn-125 contribute to the FMN site; that span reads GMT. 96–98 contacts substrate; the sequence is SQR. Gln-160 provides a ligand contact to substrate. Glu-161 provides a ligand contact to Mg(2+). FMN contacts are provided by residues Lys-193, Ser-218, Thr-223, 275 to 277, and 296 to 297; these read GIR and AL.

This sequence belongs to the IPP isomerase type 2 family. In terms of assembly, homooctamer. Dimer of tetramers. It depends on FMN as a cofactor. NADPH serves as cofactor. Requires Mg(2+) as cofactor.

Its subcellular location is the cytoplasm. The catalysed reaction is isopentenyl diphosphate = dimethylallyl diphosphate. Involved in the biosynthesis of isoprenoids. Catalyzes the 1,3-allylic rearrangement of the homoallylic substrate isopentenyl (IPP) to its allylic isomer, dimethylallyl diphosphate (DMAPP). In Saccharolobus solfataricus (strain ATCC 35092 / DSM 1617 / JCM 11322 / P2) (Sulfolobus solfataricus), this protein is Isopentenyl-diphosphate delta-isomerase.